A 291-amino-acid polypeptide reads, in one-letter code: 4-diphosphocytidyl-2-C-methyl-D-erythritol kinase (291 aa).

Lys10 is a catalytic residue. 94-104 is an ATP binding site; that stretch reads PVSAGLAGGSS. The active site involves Asp136.

The protein belongs to the GHMP kinase family. IspE subfamily.

It carries out the reaction 4-CDP-2-C-methyl-D-erythritol + ATP = 4-CDP-2-C-methyl-D-erythritol 2-phosphate + ADP + H(+). It participates in isoprenoid biosynthesis; isopentenyl diphosphate biosynthesis via DXP pathway; isopentenyl diphosphate from 1-deoxy-D-xylulose 5-phosphate: step 3/6. Its function is as follows. Catalyzes the phosphorylation of the position 2 hydroxy group of 4-diphosphocytidyl-2C-methyl-D-erythritol. The polypeptide is 4-diphosphocytidyl-2-C-methyl-D-erythritol kinase (Listeria innocua serovar 6a (strain ATCC BAA-680 / CLIP 11262)).